The sequence spans 392 residues: Putative purine permease 19 (392 aa).

Positions 1–16 are enriched in basic and acidic residues; it reads MGFHTKSPDRVTHEEE. The tract at residues 1 to 29 is disordered; sequence MGFHTKSPDRVTHEEEANIGVDNQPRETT. Ser30 is subject to Phosphoserine. Helical transmembrane passes span 46–66, 88–108, 128–148, 154–174, 182–202, 220–240, 254–274, 300–320, 325–345, and 354–374; these read ICIF…TLLL, WLQS…LLLW, LFLL…LYAI, VFFL…TTII, WIIL…TSSG, WCAF…QLGF, VILM…VGLF, LIGL…LVCL, FSNV…VLAF, and FFKE…VYSL.

Belongs to the purine permeases (TC 2.A.7.14) family.

The protein localises to the membrane. In Arabidopsis thaliana (Mouse-ear cress), this protein is Putative purine permease 19 (PUP19).